We begin with the raw amino-acid sequence, 185 residues long: Ribosome-recycling factor (185 aa).

This sequence belongs to the RRF family.

The protein resides in the cytoplasm. Responsible for the release of ribosomes from messenger RNA at the termination of protein biosynthesis. May increase the efficiency of translation by recycling ribosomes from one round of translation to another. The protein is Ribosome-recycling factor of Thermobifida fusca (strain YX).